Here is a 388-residue protein sequence, read N- to C-terminus: tRNA-specific 2-thiouridylase MnmA (388 aa).

Residues 26–33 and Leu-52 contribute to the ATP site; that span reads GLSGGVDS. The Nucleophile role is filled by Cys-113. Cys-113 and Cys-223 form a disulfide bridge. Residue Gly-138 coordinates ATP. Residues 173–175 are interaction with tRNA; sequence KDQ. Cys-223 serves as the catalytic Cysteine persulfide intermediate. An interaction with tRNA region spans residues 328–329; sequence RY.

The protein belongs to the MnmA/TRMU family.

It is found in the cytoplasm. It carries out the reaction S-sulfanyl-L-cysteinyl-[protein] + uridine(34) in tRNA + AH2 + ATP = 2-thiouridine(34) in tRNA + L-cysteinyl-[protein] + A + AMP + diphosphate + H(+). Its function is as follows. Catalyzes the 2-thiolation of uridine at the wobble position (U34) of tRNA, leading to the formation of s(2)U34. The protein is tRNA-specific 2-thiouridylase MnmA of Prochlorococcus marinus (strain NATL2A).